We begin with the raw amino-acid sequence, 426 residues long: Formate-dependent phosphoribosylglycinamide formyltransferase (426 aa).

N(1)-(5-phospho-beta-D-ribosyl)glycinamide is bound by residues 26–27 (EL) and Glu-86. ATP contacts are provided by residues Arg-118, Lys-158, 197 to 200 (EEFI), and Glu-205. The region spanning 123-324 (EAIASTGART…EFALHAKAVL (202 aa)) is the ATP-grasp domain. 2 residues coordinate Mg(2+): Glu-279 and Glu-293. N(1)-(5-phospho-beta-D-ribosyl)glycinamide contacts are provided by residues Asp-300, Lys-374, and 381–382 (RR).

Belongs to the PurK/PurT family. As to quaternary structure, homodimer.

The catalysed reaction is N(1)-(5-phospho-beta-D-ribosyl)glycinamide + formate + ATP = N(2)-formyl-N(1)-(5-phospho-beta-D-ribosyl)glycinamide + ADP + phosphate + H(+). The protein operates within purine metabolism; IMP biosynthesis via de novo pathway; N(2)-formyl-N(1)-(5-phospho-D-ribosyl)glycinamide from N(1)-(5-phospho-D-ribosyl)glycinamide (formate route): step 1/1. In terms of biological role, involved in the de novo purine biosynthesis. Catalyzes the transfer of formate to 5-phospho-ribosyl-glycinamide (GAR), producing 5-phospho-ribosyl-N-formylglycinamide (FGAR). Formate is provided by PurU via hydrolysis of 10-formyl-tetrahydrofolate. The sequence is that of Formate-dependent phosphoribosylglycinamide formyltransferase from Methanocella arvoryzae (strain DSM 22066 / NBRC 105507 / MRE50).